Here is a 229-residue protein sequence, read N- to C-terminus: Protein fmp52-2, mitochondrial (229 aa).

The N-terminal 44 residues, 1–44 (MTAAAVFGCTGAVGSQILATLLASDAFSSVATVSRKLPTAESPK), are a transit peptide targeting the mitochondrion.

This sequence belongs to the FMP52 family.

Its subcellular location is the mitochondrion outer membrane. This is Protein fmp52-2, mitochondrial (fmp522) from Aspergillus terreus (strain NIH 2624 / FGSC A1156).